We begin with the raw amino-acid sequence, 667 residues long: Gamma-tubulin complex component 4 (667 aa).

A disordered region spans residues 424 to 446; that stretch reads DHKADATQPREVPSRETSPREAP.

It belongs to the TUBGCP family. As to quaternary structure, component of the gamma-tubulin ring complex (gTuRC) consisting of TUBGCP2, TUBGCP3, TUBGCP4, TUBGCP5 and TUBGCP6 and gamma-tubulin TUBG1 or TUBG2. TUBGCP2, TUBGCP3, TUBGCP4, TUBGCP5 and TUBGCP6 assemble in a 5:5:2:1:1 stoichiometry; each is associated with a gamma-tubulin, thereby arranging 14 gamma-tubulins in a helical manner. Gamma-tubulin at the first position is blocked by TUBGCP3 at the last position, allowing 13 protafilaments to grow into a microtubule. The gTuRC (via TUBGCP3 and TUBGCP6) interacts with ACTB and MZT1; the interactions form a luminal bridge that stabilizes the initial structure during complex assembly. The gTuRC (via TUBGCP2) interacts with MZT2A/MZT2B and CDK5RAP2 (via CM1 motif); the interactions play a role in gTuRC activation. Interacts with NINL. Interacts with ATF5; the ATF5:PCNT:polyglutamylated tubulin (PGT) tripartite unites the mother centriole and the pericentriolar material (PCM) in the centrosome.

The protein localises to the cytoplasm. Its subcellular location is the cytoskeleton. The protein resides in the microtubule organizing center. It is found in the centrosome. Functionally, component of the gamma-tubulin ring complex (gTuRC) which mediates microtubule nucleation. The gTuRC regulates the minus-end nucleation of alpha-beta tubulin heterodimers that grow into microtubule protafilaments, a critical step in centrosome duplication and spindle formation. The chain is Gamma-tubulin complex component 4 (Tubgcp4) from Mus musculus (Mouse).